We begin with the raw amino-acid sequence, 440 residues long: Elongation factor 1-alpha (440 aa).

Residues 5–228 (KPHINLVVIG…ALDTYIQPPK (224 aa)) form the tr-type G domain. The G1 stretch occupies residues 14-21 (GHVDHGKS). 14 to 21 (GHVDHGKS) provides a ligand contact to GTP. A Mg(2+)-binding site is contributed by Ser-21. The segment at 70–74 (GVTID) is G2. Positions 91 to 94 (DAPG) are G3. Residues 91–95 (DAPGH) and 153–156 (NKMD) contribute to the GTP site. A G4 region spans residues 153–156 (NKMD). The tract at residues 194–196 (SAW) is G5.

Belongs to the TRAFAC class translation factor GTPase superfamily. Classic translation factor GTPase family. EF-Tu/EF-1A subfamily.

It is found in the cytoplasm. It carries out the reaction GTP + H2O = GDP + phosphate + H(+). Functionally, GTP hydrolase that promotes the GTP-dependent binding of aminoacyl-tRNA to the A-site of ribosomes during protein biosynthesis. The polypeptide is Elongation factor 1-alpha (Hyperthermus butylicus (strain DSM 5456 / JCM 9403 / PLM1-5)).